The chain runs to 192 residues: Secreted and transmembrane protein 1A (192 aa).

An N-terminal signal peptide occupies residues 1–27; that stretch reads MMTCPSVPAIPTLWLFSILLLVVSLNA. The Extracellular portion of the chain corresponds to 28 to 165; sequence QNKSWDNPIC…SSPIEGKPGT (138 aa). Asn29, Asn55, Asn84, and Asn127 each carry an N-linked (GlcNAc...) asparagine glycan. Residues 166–186 form a helical membrane-spanning segment; the sequence is LVGVITVIFILGVAGFITFIY. Residues 187–192 are Cytoplasmic-facing; it reads YRHRRS.

It belongs to the SECTM family.

It localises to the cell membrane. The protein resides in the secreted. This is Secreted and transmembrane protein 1A from Mus musculus (Mouse).